We begin with the raw amino-acid sequence, 639 residues long: DNA gyrase subunit B (639 aa).

Over residues 392-402 (QAEELTRRKSA) the composition is skewed to basic and acidic residues. The segment at 392-416 (QAEELTRRKSALESTSLPGKLADCQ) is disordered. The region spanning 423-537 (SELFIVEGDS…AGYVYAAQPP (115 aa)) is the Toprim domain. E429, D502, and D504 together coordinate Mg(2+). A Glycyl lysine isopeptide (Lys-Gly) (interchain with G-Cter in SAMP2) cross-link involves residue K624.

It belongs to the type II topoisomerase GyrB family. In terms of assembly, heterotetramer, composed of two GyrA and two GyrB chains. In the heterotetramer, GyrA contains the active site tyrosine that forms a transient covalent intermediate with DNA, while GyrB binds cofactors and catalyzes ATP hydrolysis. It depends on Mg(2+) as a cofactor. Mn(2+) is required as a cofactor. The cofactor is Ca(2+).

Its subcellular location is the cytoplasm. The enzyme catalyses ATP-dependent breakage, passage and rejoining of double-stranded DNA.. In terms of biological role, a type II topoisomerase that negatively supercoils closed circular double-stranded (ds) DNA in an ATP-dependent manner to modulate DNA topology and maintain chromosomes in an underwound state. Negative supercoiling favors strand separation, and DNA replication, transcription, recombination and repair, all of which involve strand separation. Also able to catalyze the interconversion of other topological isomers of dsDNA rings, including catenanes and knotted rings. Type II topoisomerases break and join 2 DNA strands simultaneously in an ATP-dependent manner. The protein is DNA gyrase subunit B of Haloferax volcanii (strain ATCC 29605 / DSM 3757 / JCM 8879 / NBRC 14742 / NCIMB 2012 / VKM B-1768 / DS2) (Halobacterium volcanii).